A 251-amino-acid polypeptide reads, in one-letter code: ATP synthase subunit a (251 aa).

Helical transmembrane passes span 34 to 54 (VFLTSWFVIGVLVLASVAASS), 93 to 113 (FVGTLFLFIFVSNWSGALVPF), 130 to 150 (INTTVALALLTSLAYFYAGFS), 195 to 215 (LVVGVLVLLVPLFVPLPVMAL), and 216 to 236 (GLFTSAIQALIFATLAAAYIG).

The protein belongs to the ATPase A chain family. As to quaternary structure, F-type ATPases have 2 components, CF(1) - the catalytic core - and CF(0) - the membrane proton channel. CF(1) has five subunits: alpha(3), beta(3), gamma(1), delta(1), epsilon(1). CF(0) has four main subunits: a, b, b' and c.

The protein resides in the cellular thylakoid membrane. Functionally, key component of the proton channel; it plays a direct role in the translocation of protons across the membrane. The polypeptide is ATP synthase subunit a (Nostoc sp. (strain PCC 7120 / SAG 25.82 / UTEX 2576)).